Consider the following 208-residue polypeptide: Kininogen-1b (208 aa).

A signal peptide spans 1–23 (MRLWFCLSFFIVLCLEHFPETLA). Residues 27 to 44 (NVPESEEKTEQYLRDLPK) are compositionally biased toward basic and acidic residues. The interval 27-208 (NVPESEEKTE…RGKFHSQSHV (182 aa)) is disordered.

Belongs to the bradykinin-related peptide family. Expressed by the skin glands.

The protein resides in the secreted. Its function is as follows. In vitro, produces constriction of guinea pig ileum smooth muscle. May target bradykinin receptors (BDKRB). This is Kininogen-1b from Bombina maxima (Giant fire-bellied toad).